A 2322-amino-acid polypeptide reads, in one-letter code: Genome polyprotein (2322 aa).

Residues 29-182 (MEFTLYNGEK…NPADVLVFVP (154 aa)) form the Peptidase C28 domain. Catalysis depends on for leader protease activity residues Cys-51, His-148, and Asp-163. Disordered regions lie at residues 199–219 (RLRG…SGNT) and 238–262 (QLGD…HTNN). Gly-202 is lipidated: N-myristoyl glycine; by host. 2 stretches are compositionally biased toward polar residues: residues 204–219 (GQSS…SGNT) and 238–251 (QLGD…SNEG). Low complexity predominate over residues 252–262 (STDTTSTHTNN). A Cell attachment site motif is present at residues 869 to 871 (RGD). One can recognise an SF3 helicase domain in the interval 1189 to 1353 (NVHIANLCKV…DGYKINNKLD (165 aa)). 1217–1224 (GKSGQGKS) provides a ligand contact to ATP. Residues 1484–1504 (FEVVALCLTLLANIVIMLRQA) lie within the membrane without spanning it. The segment at 1512 to 1574 (DDPLDGDVTL…PRAEGPYAGP (63 aa)) is disordered. Positions 1539-1553 (FRERSPTEQGTREDA) are enriched in basic and acidic residues. Tyr-1571, Tyr-1594, and Tyr-1618 each carry O-(5'-phospho-RNA)-tyrosine. One can recognise a Peptidase C3 domain in the interval 1642-1838 (APPTDLQKMV…YCSCVSRSML (197 aa)). Residue His-1685 is the For protease 3C activity; Proton donor/acceptor of the active site. Catalysis depends on for protease 3C activity residues Asp-1723 and Cys-1802. A Nuclear localization signal motif is present at residues 1868–1876 (MRKTKLAPT). The RdRp catalytic domain maps to 2086–2204 (KNVWDVDYSA…ASDYDLDFEA (119 aa)).

It belongs to the picornaviruses polyprotein family. As to quaternary structure, interacts with host ISG15. Interacts (via R-G-D motif) with host ITGAV/ITGB6. Interacts with host MAVS; this interaction inhibits binding of host TRAF3 to MAVS, thereby suppressing interferon-mediated responses. In terms of assembly, forms homooligomers. As to quaternary structure, homohexamer. Interacts with host VIM. Interacts with host BECN1. Interacts with host DCTN3. In terms of assembly, interacts with RNA-dependent RNA polymerase; this interaction allows 3B-1 to binds 2 polymerases and act as a primer. It also allows the recruitment of the RNA-dependent RNA polymerase to host membranes. As to quaternary structure, interacts with RNA-dependent RNA polymerase; this interaction allows 3B-2 to act as a primer. Interacts with RNA-dependent RNA polymerase; this interaction allows 3B-3 to act as a primer. In terms of assembly, interacts with 3B-1; this interaction allows 3B-1 to binds 2 polymerases and act as a primer. It also allows the recruitment of the RNA-dependent RNA polymerase to host membranes. Interacts with 3B-2; this interaction allows 3B-2 to act as a primer. Interacts with 3B-3; this interaction allows 3B-3 to act as a primer. In terms of processing, removes six residues from its own C-terminus, generating sLb(pro). Post-translationally, specific enzymatic cleavages in vivo by the viral proteases yield a variety of precursors and mature proteins. The polyprotein seems to be cotranslationally cleaved at the 2A/2B junction by a ribosomal skip from one codon to the next without formation of a peptide bond. This process would release the L-P1-2A peptide from the translational complex. During virion maturation, immature virions are rendered infectious following cleavage of VP0 into VP4 and VP2. This maturation seems to be an autocatalytic event triggered by the presence of RNA in the capsid and is followed by a conformational change of the particle. In terms of processing, myristoylation is required during RNA encapsidation and formation of the mature virus particle. Post-translationally, uridylylated by the polymerase and covalently linked to the 5'-end of genomic RNA. These uridylylated forms act as a nucleotide-peptide primer for the polymerase.

It localises to the host nucleus. It is found in the host cytoplasm. Its subcellular location is the virion. The protein localises to the host endoplasmic reticulum membrane. The protein resides in the host cytoplasmic vesicle membrane. The catalysed reaction is Autocatalytically cleaves itself from the polyprotein of the foot-and-mouth disease virus by hydrolysis of a Lys-|-Gly bond, but then cleaves host cell initiation factor eIF-4G at bonds -Gly-|-Arg- and -Lys-|-Arg-.. It carries out the reaction a ribonucleoside 5'-triphosphate + H2O = a ribonucleoside 5'-diphosphate + phosphate + H(+). It catalyses the reaction RNA(n) + a ribonucleoside 5'-triphosphate = RNA(n+1) + diphosphate. The enzyme catalyses Selective cleavage of Gln-|-Gly bond in the poliovirus polyprotein. In other picornavirus reactions Glu may be substituted for Gln, and Ser or Thr for Gly.. Functionally, autocatalytically cleaves itself from the polyprotein at the L/VP0 junction. Also cleaves the host translation initiation factors EIF4G1 and EIF4G3, in order to shut off the capped cellular mRNA transcription. Plays a role in counteracting host innate antiviral response using diverse mechanisms. Possesses a deubiquitinase activity acting on both 'Lys-48' and 'Lys-63'-linked polyubiquitin chains. In turn, inhibits the ubiquitination and subsequent activation of key signaling molecules of type I IFN response such as host RIGI, TBK1, TRAF3 and TRAF6. Inhibits host NF-kappa-B activity by inducing a decrease in RELA mRNA levels. Cleaves a peptide bond in the C-terminus of host ISG15, resulting in the damaging of this modifier that can no longer be attached to target proteins. Also cleaves host G3BP1 and G3BP2 in order to inhibit cytoplasmic stress granules assembly. In terms of biological role, lies on the inner surface of the capsid shell. After binding to the host receptor, the capsid undergoes conformational changes. Capsid protein VP4 is released, capsid protein VP1 N-terminus is externalized, and together, they shape a pore in the host membrane through which the viral genome is translocated into the host cell cytoplasm. After genome has been released, the channel shrinks. Its function is as follows. Forms an icosahedral capsid of pseudo T=3 symmetry with capsid proteins VP1 and VP3. The capsid is composed of 60 copies of each capsid protein organized in the form of twelve pentamers and encloses the viral positive strand RNA genome. Upon acidifcation in the endosome, dissociates into pentamers. Forms an icosahedral capsid of pseudo T=3 symmetry with capsid proteins VP0 and VP3. The capsid is composed of 60 copies of each capsid protein organized in the form of twelve pentamers and encloses the viral positive strand RNA genome. Upon acidifcation in the endosome, dissociates into pentamers. Functionally, forms an icosahedral capsid of pseudo T=3 symmetry with capsid proteins VP2 and VP3. The capsid is composed of 60 copies of each capsid protein organized in the form of twelve pentamers and encloses the viral positive strand RNA genome. Mediates cell entry by attachment to an integrin receptor, usually host ITGAV/ITGB6. In addition, targets host MAVS to suppress type I IFN pathway. Upon acidifcation in the endosome, dissociates into pentamers. In terms of biological role, mediates self-processing of the polyprotein by a translational effect termed 'ribosome skipping'. Mechanistically, 2A-mediated cleavage occurs between the C-terminal glycine and the proline of the downstream protein 2B. In the case of foot-and-mouth disease virus, the 2A oligopeptide is post-translationally 'trimmed' from the C-terminus of the upstream protein 1D by 3C proteinase. Its function is as follows. Plays an essential role in the virus replication cycle by acting as a viroporin. Creates a pore in the host endoplasmic reticulum and as a consequence releases Ca2+ in the cytoplasm of infected cell. In turn, high levels of cytoplasmic calcium may trigger membrane trafficking and transport of viral ER-associated proteins to viroplasms, sites of viral genome replication. Associates with and induces structural rearrangements of intracellular membranes. Triggers host autophagy by interacting with host BECN1 and thereby promotes viral replication. Participates in viral replication and interacts with host DHX9. Displays RNA-binding, nucleotide binding and NTPase activities. May play a role in virion morphogenesis and viral RNA encapsidation by interacting with the capsid protein VP3. Functionally, plays important roles in virus replication, virulence and host range. Cooperates with host DDX56 to inhibit IRF3 nuclear translocation and subsequent type I interferon production. In terms of biological role, covalently linked to the 5'-end of both the positive-strand and negative-strand genomic RNAs. Acts as a genome-linked replication primer. Its function is as follows. Cysteine protease that generates mature viral proteins from the precursor polyprotein. In addition to its proteolytic activity, binds to viral RNA and thus influences viral genome replication. RNA and substrate bind cooperatively to the protease. RNA-directed RNA polymerase 3D-POL replicates genomic and antigenomic RNA by recognizing replications specific signals. Covalently attaches UMP to a tyrosine of VPg, which is used to prime RNA synthesis. The positive stranded RNA genome is first replicated at virus induced membranous vesicles, creating a dsRNA genomic replication form. This dsRNA is then used as template to synthesize positive stranded RNA genomes. ss(+)RNA genomes are either translated, replicated or encapsidated. The protein is Genome polyprotein of Foot-and-mouth disease virus (isolate Swine/Taiwan/OTai/1997 serotype O) (FMDV).